Consider the following 385-residue polypeptide: L-arabinitol 4-dehydrogenase (385 aa).

Zn(2+)-binding residues include C54, H79, E80, C109, C112, C115, C123, and E164. Residues P191–I192, D212, R217, I292, and Q316–R318 each bind NAD(+).

The protein belongs to the zinc-containing alcohol dehydrogenase family. As to quaternary structure, homotetramer. It depends on Zn(2+) as a cofactor.

The catalysed reaction is L-arabinitol + NAD(+) = L-xylulose + NADH + H(+). The protein operates within carbohydrate degradation; L-arabinose degradation via L-arabinitol; D-xylulose 5-phosphate from L-arabinose (fungal route): step 2/5. Catalyzes the NAD-dependent oxidation of L-arabinitol to L-xylulose in the fungal L-arabinose catabolic pathway. L-arabinose catabolism is important for using plant material as a carbon source. NADP cannot act as a cosubstrate. The polypeptide is L-arabinitol 4-dehydrogenase (lad1) (Penicillium rubens (strain ATCC 28089 / DSM 1075 / NRRL 1951 / Wisconsin 54-1255) (Penicillium chrysogenum)).